Here is a 202-residue protein sequence, read N- to C-terminus: MNFLRKIVKNCRDEDTQKPSPVSAPLDDDDLWLPPPEYVPLKELTSKKNRRNFCINGGVKVCSPNGYSFGILRHILRSFDEIYSGNHRMVGLVKVVIGLALSGAPVPEGMNWVYKLRRTLIFQWADSRGPLEGEELEYSQEITWDDNTEFVGLQIRVSAKQCHIRGRIWCINMNSRAGQLWSDMSLQTQRSEEDKDSSLLLE.

Residues 35 to 38 carry the PPXY motif motif; sequence PPEY. The essential for glycoprotein binding stretch occupies residues 115–151; the sequence is KLRRTLIFQWADSRGPLEGEELEYSQEITWDDNTEFV.

This sequence belongs to the lyssavirus matrix protein family. In terms of assembly, homomultimer. Interacts with nucleoprotein and with the cytoplasmic domain of glycoprotein. Interacts with host ATP6V1A; this interaction plays an important role in virion uncoating after viral entry.

It is found in the virion membrane. The protein localises to the host endomembrane system. The protein resides in the host cytoplasm. Plays a major role in assembly, budding and uncoating of virion after membrane fusion. Completely covers the ribonucleoprotein coil and keep it in condensed bullet-shaped form. Inhibits viral transcription and stimulates replication. Plays a major role in early induction of TRAIL-mediated apoptosis in infected neurons. Inhibits the integrated stress response (ISR) in the infected cell by blocking the formation of stress granules. This is Matrix protein (M) from Homo sapiens (Human).